We begin with the raw amino-acid sequence, 423 residues long: Enolase (423 aa).

(2R)-2-phosphoglycerate is bound at residue Gln-162. The Proton donor role is filled by Glu-204. The Mg(2+) site is built by Asp-241, Glu-284, and Asp-311. Residues Lys-336, Arg-365, Ser-366, and Lys-387 each coordinate (2R)-2-phosphoglycerate. The Proton acceptor role is filled by Lys-336.

The protein belongs to the enolase family. Mg(2+) is required as a cofactor.

The protein resides in the cytoplasm. It is found in the secreted. Its subcellular location is the cell surface. The catalysed reaction is (2R)-2-phosphoglycerate = phosphoenolpyruvate + H2O. Its pathway is carbohydrate degradation; glycolysis; pyruvate from D-glyceraldehyde 3-phosphate: step 4/5. Functionally, catalyzes the reversible conversion of 2-phosphoglycerate (2-PG) into phosphoenolpyruvate (PEP). It is essential for the degradation of carbohydrates via glycolysis. In Bartonella bacilliformis (strain ATCC 35685 / KC583 / Herrer 020/F12,63), this protein is Enolase.